Reading from the N-terminus, the 140-residue chain is Flagellar assembly factor FliW (140 aa).

Belongs to the FliW family. In terms of assembly, interacts with translational regulator CsrA and flagellin(s).

The protein resides in the cytoplasm. In terms of biological role, acts as an anti-CsrA protein, binds CsrA and prevents it from repressing translation of its target genes, one of which is flagellin. Binds to flagellin and participates in the assembly of the flagellum. The sequence is that of Flagellar assembly factor FliW from Syntrophotalea carbinolica (strain DSM 2380 / NBRC 103641 / GraBd1) (Pelobacter carbinolicus).